The primary structure comprises 878 residues: MTSDRYNARDAEPRWQAAWDQQAIFATKNDDPREKYYVLEMFPYPSGRIHIGHVRNYTLGDVIARYMRAKGYNVLHPMGWDAFGLPAENAAIERKVAPKAWTYDNIKAMKKQLRSIGLSLDWAREFATCDPSYYKHQQKMFLDFLRAGLAEREKRKINWDPVDMTVLANEQVIDGRGWRSGAVVEQREMNQWVFKITKYSQELLEALDTLDRWPDKVRLMQRNWIGRSEGLLLRFALDPATTPNGEGELKIFTTRPDTLFGAKFMAIAPDHPLAQAAAKDNPALAEFIAECKRRGTAQAEIDTAEKMGFDTGIRAIHPFDPDWTLPVYVANFILMEYGTGAIFGCPAHDQRDLDFVNKYGLGNTPVVCPEGQDPKTLVITDTAYDGDGRMINSRFLDGMTAEAAKKEVAKRLESEMRGNMPVGERKVNFRLRDWGISRQRYWGCPIPVIHCPKCDVVPVPENDLPVTLPEDVTFDKPGNALDHHPTWKHVTCPQCGARATRETDTMDTFVDSSWYFARFTDPWNETAPTTPEIANRMMPVDQYIGGVEHAILHLLYSRFFTRAMKATGHLSMDEPFKGMFTQGMVVHETYRKADGGWASPDEVGIEAVGNGRRATLISTGEPVEIGAVEKMSKSKRNTVDPDDIIGSYGADTARWFMLSDSPPDRDVIWSEEGVQGASRFMQRLWRLVNESAEAGKAAPRDKPATFGTDALALRKAAHGALDKVSTGIERLHFNVCLANIREFANTLAETLARFGTRTSDLAPDIAWSLREAATILVQLFSPMMPHLSEECWHALGHTGLVSEARWPQIERDLLVEDTVTLPVQVNGKKRGEVTVASSAPNPEIETAVLALDAVRQALGGKPARKIIIVPQRIVNVVG.

Positions 43 to 53 match the 'HIGH' region motif; that stretch reads PYPSGRIHIGH. The short motif at 630–634 is the 'KMSKS' region element; sequence KMSKS. Lysine 633 is a binding site for ATP.

Belongs to the class-I aminoacyl-tRNA synthetase family.

Its subcellular location is the cytoplasm. It carries out the reaction tRNA(Leu) + L-leucine + ATP = L-leucyl-tRNA(Leu) + AMP + diphosphate. This chain is Leucine--tRNA ligase, found in Nitrobacter hamburgensis (strain DSM 10229 / NCIMB 13809 / X14).